Consider the following 284-residue polypeptide: D-tagatose-1,6-bisphosphate aldolase subunit GatY (284 aa).

The active-site Proton donor is aspartate 82. Positions 83 and 180 each coordinate Zn(2+). Glycine 181 contacts dihydroxyacetone phosphate. Residue histidine 208 participates in Zn(2+) binding. Residues 209–211 and 230–233 each bind dihydroxyacetone phosphate; these read GAS and NVAT.

Belongs to the class II fructose-bisphosphate aldolase family. TagBP aldolase GatY subfamily. Forms a complex with GatZ. It depends on Zn(2+) as a cofactor.

The catalysed reaction is D-tagatofuranose 1,6-bisphosphate = D-glyceraldehyde 3-phosphate + dihydroxyacetone phosphate. It functions in the pathway carbohydrate metabolism; D-tagatose 6-phosphate degradation; D-glyceraldehyde 3-phosphate and glycerone phosphate from D-tagatose 6-phosphate: step 2/2. Catalytic subunit of the tagatose-1,6-bisphosphate aldolase GatYZ, which catalyzes the reversible aldol condensation of dihydroxyacetone phosphate (DHAP or glycerone-phosphate) with glyceraldehyde 3-phosphate (G3P) to produce tagatose 1,6-bisphosphate (TBP). Requires GatZ subunit for full activity and stability. Is involved in the catabolism of galactitol. This chain is D-tagatose-1,6-bisphosphate aldolase subunit GatY, found in Escherichia coli O6:H1 (strain CFT073 / ATCC 700928 / UPEC).